The primary structure comprises 511 residues: Pancreatic alpha-amylase (511 aa).

The first 15 residues, 1-15, serve as a signal peptide directing secretion; the sequence is MKFFLLLFTIGFCWA. Gln-16 bears the Pyrrolidone carboxylic acid mark. Disulfide bonds link Cys-43-Cys-101, Cys-85-Cys-130, and Cys-156-Cys-175. Ca(2+)-binding residues include Asn-115, Arg-173, and Asp-182. Arg-210 lines the chloride pocket. Asp-212 (nucleophile) is an active-site residue. A Ca(2+)-binding site is contributed by His-216. Glu-248 (proton donor) is an active-site residue. Chloride is bound by residues Asn-313 and Arg-352. 2 cysteine pairs are disulfide-bonded: Cys-393/Cys-399 and Cys-465/Cys-477. Residue Asn-476 is glycosylated (N-linked (GlcNAc...) asparagine).

This sequence belongs to the glycosyl hydrolase 13 family. As to quaternary structure, monomer. Binds to the sea anemone inhibitor helianthamide. Ca(2+) is required as a cofactor. Chloride serves as cofactor. Detected in pancreas (at protein level).

The protein localises to the secreted. Its subcellular location is the extracellular space. The catalysed reaction is Endohydrolysis of (1-&gt;4)-alpha-D-glucosidic linkages in polysaccharides containing three or more (1-&gt;4)-alpha-linked D-glucose units.. The chain is Pancreatic alpha-amylase (AMY2A) from Homo sapiens (Human).